Here is a 67-residue protein sequence, read N- to C-terminus: Cysteine-rich venom protein bucarin (67 aa).

One can recognise an SCP domain in the interval 13 to 58 (VDKHNALRRSVRPTARNMLQMEWNSNAAQNAKRFADRCTFAHSPPH).

The protein belongs to the CRISP family. Post-translationally, contains 8 disulfide bonds. In terms of tissue distribution, expressed by the venom gland.

It is found in the secreted. Blocks contraction of smooth muscle elicited by high potassium-induced depolarization, but does not block caffeine-stimulated contraction. May target voltage-gated calcium channels on smooth muscle. The sequence is that of Cysteine-rich venom protein bucarin from Bungarus candidus (Malayan krait).